The chain runs to 1070 residues: Alpha-glucosidase (1070 aa).

A signal peptide spans 1–35; it reads MRSIKAASLTPLLAALFTTLSSTLALPSSVWEHQL. Asn-48, Asn-99, Asn-144, Asn-161, Asn-208, Asn-384, Asn-458, Asn-480, and Asn-513 each carry an N-linked (GlcNAc...) asparagine glycan. The Nucleophile role is filled by Asp-526. Residue Glu-529 is part of the active site. 5 N-linked (GlcNAc...) asparagine glycosylation sites follow: Asn-544, Asn-566, Asn-574, Asn-578, and Asn-635. The active-site Proton donor is the Asp-730. Residues Asn-818, Asn-885, Asn-916, Asn-983, Asn-992, Asn-996, Asn-1008, Asn-1029, Asn-1043, and Asn-1052 are each glycosylated (N-linked (GlcNAc...) asparagine).

The protein belongs to the glycosyl hydrolase 31 family.

It carries out the reaction Hydrolysis of terminal, non-reducing (1-&gt;4)-linked alpha-D-glucose residues with release of alpha-D-glucose.. In terms of biological role, hydrolyzes a broad range of alpha-D-linked glucopyranosides, including maltose (alpha-1,4), sucrose (alpha-1,2), isomaltose (alpha-1,6) and turanose (alpha-1,3). The chain is Alpha-glucosidase from Candida tsukubaensis (Yeast).